Here is a 318-residue protein sequence, read N- to C-terminus: Ribonuclease Z (318 aa).

7 residues coordinate Zn(2+): histidine 62, histidine 64, aspartate 66, histidine 67, histidine 144, aspartate 215, and histidine 273. The active-site Proton acceptor is the aspartate 66.

This sequence belongs to the RNase Z family. In terms of assembly, homodimer. Requires Zn(2+) as cofactor.

It carries out the reaction Endonucleolytic cleavage of RNA, removing extra 3' nucleotides from tRNA precursor, generating 3' termini of tRNAs. A 3'-hydroxy group is left at the tRNA terminus and a 5'-phosphoryl group is left at the trailer molecule.. Functionally, zinc phosphodiesterase, which displays some tRNA 3'-processing endonuclease activity. Probably involved in tRNA maturation, by removing a 3'-trailer from precursor tRNA. In Prochlorococcus marinus (strain MIT 9303), this protein is Ribonuclease Z.